The sequence spans 62 residues: Mu-conotoxin Lt5d (62 aa).

Residues 1 to 22 form the signal peptide; it reads MRCLPVFIILLLLIPSAPSVDA. Positions 23–48 are excised as a propeptide; sequence QPTTKDDVPLASLHDNAKRALQMFWN.

This sequence belongs to the conotoxin T superfamily. Contains 2 disulfide bonds that can be either 'C1-C3, C2-C4' or 'C1-C4, C2-C3', since these disulfide connectivities have been observed for conotoxins with cysteine framework V (for examples, see AC P0DQQ7 and AC P81755). Expressed by the venom duct.

The protein resides in the secreted. Its function is as follows. Mu-conotoxins block voltage-gated sodium channels (Nav). This toxin inhibits tetrodotoxin(TTX)-sensitive sodium channels, but does not affect TTX-resistant sodium channels. Reduces the amplitude of currents without changing the activation and inactivation kinetics of currents. This is Mu-conotoxin Lt5d from Conus litteratus (Lettered cone).